Reading from the N-terminus, the 234-residue chain is Phosphoribosylaminoimidazole-succinocarboxamide synthase (234 aa).

It belongs to the SAICAR synthetase family.

It catalyses the reaction 5-amino-1-(5-phospho-D-ribosyl)imidazole-4-carboxylate + L-aspartate + ATP = (2S)-2-[5-amino-1-(5-phospho-beta-D-ribosyl)imidazole-4-carboxamido]succinate + ADP + phosphate + 2 H(+). It participates in purine metabolism; IMP biosynthesis via de novo pathway; 5-amino-1-(5-phospho-D-ribosyl)imidazole-4-carboxamide from 5-amino-1-(5-phospho-D-ribosyl)imidazole-4-carboxylate: step 1/2. This Clostridium botulinum (strain ATCC 19397 / Type A) protein is Phosphoribosylaminoimidazole-succinocarboxamide synthase.